The following is a 241-amino-acid chain: 1-(5-phosphoribosyl)-5-[(5-phosphoribosylamino)methylideneamino] imidazole-4-carboxamide isomerase (241 aa).

Asp-8 functions as the Proton acceptor in the catalytic mechanism. The Proton donor role is filled by Asp-129.

Belongs to the HisA/HisF family.

It localises to the cytoplasm. The enzyme catalyses 1-(5-phospho-beta-D-ribosyl)-5-[(5-phospho-beta-D-ribosylamino)methylideneamino]imidazole-4-carboxamide = 5-[(5-phospho-1-deoxy-D-ribulos-1-ylimino)methylamino]-1-(5-phospho-beta-D-ribosyl)imidazole-4-carboxamide. Its pathway is amino-acid biosynthesis; L-histidine biosynthesis; L-histidine from 5-phospho-alpha-D-ribose 1-diphosphate: step 4/9. The polypeptide is 1-(5-phosphoribosyl)-5-[(5-phosphoribosylamino)methylideneamino] imidazole-4-carboxamide isomerase (Caulobacter sp. (strain K31)).